A 629-amino-acid chain; its full sequence is Putative polypeptide N-acetylgalactosaminyltransferase 10 (629 aa).

Topologically, residues 1–12 are cytoplasmic; that stretch reads MGLSRYLSRRHH. The helical; Signal-anchor for type II membrane protein transmembrane segment at 13-33 threads the bilayer; sequence WVIQYCALLLFLYFIYSYVAV. At 34–629 the chain is on the lumenal side; it reads SNDAPRLNEE…RQANEHKELE (596 aa). N-linked (GlcNAc...) asparagine glycans are attached at residues Asn143 and Asn177. 5 disulfides stabilise this stretch: Cys154–Cys385, Cys376–Cys454, Cys493–Cys510, Cys539–Cys556, and Cys582–Cys598. The tract at residues 163–275 is catalytic subdomain A; it reads LPTVSVIFPF…YNWLPPLLDP (113 aa). Substrate-binding residues include Asp204 and Arg236. Asp259 and His261 together coordinate Mn(2+). The tract at residues 331–393 is catalytic subdomain B; the sequence is PFDSPVMAGG…PCSRVAHIYR (63 aa). Trp362 contacts substrate. His390 is a Mn(2+) binding site. Arg393 serves as a coordination point for substrate. Residues 393–406 form a flexible loop region; that stretch reads RCKYAPFKNAGMGD. The region spanning 526 to 629 is the Ricin B-type lectin domain; sequence TRWHDIRPKG…RQANEHKELE (104 aa).

It belongs to the glycosyltransferase 2 family. GalNAc-T subfamily. Requires Mn(2+) as cofactor.

Its subcellular location is the golgi apparatus membrane. It catalyses the reaction L-seryl-[protein] + UDP-N-acetyl-alpha-D-galactosamine = a 3-O-[N-acetyl-alpha-D-galactosaminyl]-L-seryl-[protein] + UDP + H(+). The enzyme catalyses L-threonyl-[protein] + UDP-N-acetyl-alpha-D-galactosamine = a 3-O-[N-acetyl-alpha-D-galactosaminyl]-L-threonyl-[protein] + UDP + H(+). The protein operates within protein modification; protein glycosylation. May catalyze the initial reaction in O-linked oligosaccharide biosynthesis, the transfer of an N-acetyl-D-galactosamine residue to a serine or threonine residue on the protein receptor. The sequence is that of Putative polypeptide N-acetylgalactosaminyltransferase 10 from Caenorhabditis briggsae.